The following is a 197-amino-acid chain: Recombination protein RecR (197 aa).

The C4-type zinc finger occupies 57-72; the sequence is CSVCFAITEDDPCWIC. The Toprim domain maps to 79 to 174; sequence GTICVVEEPQ…KVTRLAHGIP (96 aa).

Belongs to the RecR family.

Its function is as follows. May play a role in DNA repair. It seems to be involved in an RecBC-independent recombinational process of DNA repair. It may act with RecF and RecO. The chain is Recombination protein RecR from Geobacter sp. (strain M21).